A 460-amino-acid chain; its full sequence is NADH-quinone oxidoreductase subunit N (460 aa).

A run of 13 helical transmembrane segments spans residues 2 to 22, 28 to 48, 65 to 85, 104 to 124, 155 to 175, 196 to 216, 230 to 250, 263 to 283, 292 to 312, 321 to 341, 363 to 383, 400 to 420, and 438 to 458; these read LLPE…AVML, IVAN…LKYS, ANIA…MIIY, ILLS…LLLF, FILG…IYGF, LGLV…LSSA, PIAS…AILL, ISYN…ALGA, LMAY…LLRT, LYML…IMLL, IAAA…LAGF, LLAY…LKII, and YGLL…SFII.

The protein belongs to the complex I subunit 2 family. As to quaternary structure, NDH-1 is composed of 14 different subunits. Subunits NuoA, H, J, K, L, M, N constitute the membrane sector of the complex.

It localises to the cell inner membrane. It catalyses the reaction a quinone + NADH + 5 H(+)(in) = a quinol + NAD(+) + 4 H(+)(out). In terms of biological role, NDH-1 shuttles electrons from NADH, via FMN and iron-sulfur (Fe-S) centers, to quinones in the respiratory chain. The immediate electron acceptor for the enzyme in this species is believed to be ubiquinone. Couples the redox reaction to proton translocation (for every two electrons transferred, four hydrogen ions are translocated across the cytoplasmic membrane), and thus conserves the redox energy in a proton gradient. In Rickettsia bellii (strain RML369-C), this protein is NADH-quinone oxidoreductase subunit N.